Consider the following 231-residue polypeptide: uncharacterized protein (231 aa).

A run of 3 helical transmembrane segments spans residues 6-26 (IKLI…YKYI), 39-59 (NIVS…STFS), and 66-86 (FCFQ…GYAF).

Its subcellular location is the cell membrane. This is an uncharacterized protein from Rickettsia prowazekii (strain Madrid E).